The following is a 568-amino-acid chain: Proline--tRNA ligase (568 aa).

This sequence belongs to the class-II aminoacyl-tRNA synthetase family. ProS type 1 subfamily. As to quaternary structure, homodimer.

Its subcellular location is the cytoplasm. It catalyses the reaction tRNA(Pro) + L-proline + ATP = L-prolyl-tRNA(Pro) + AMP + diphosphate. In terms of biological role, catalyzes the attachment of proline to tRNA(Pro) in a two-step reaction: proline is first activated by ATP to form Pro-AMP and then transferred to the acceptor end of tRNA(Pro). As ProRS can inadvertently accommodate and process non-cognate amino acids such as alanine and cysteine, to avoid such errors it has two additional distinct editing activities against alanine. One activity is designated as 'pretransfer' editing and involves the tRNA(Pro)-independent hydrolysis of activated Ala-AMP. The other activity is designated 'posttransfer' editing and involves deacylation of mischarged Ala-tRNA(Pro). The misacylated Cys-tRNA(Pro) is not edited by ProRS. This Chromobacterium violaceum (strain ATCC 12472 / DSM 30191 / JCM 1249 / CCUG 213 / NBRC 12614 / NCIMB 9131 / NCTC 9757 / MK) protein is Proline--tRNA ligase.